The following is a 393-amino-acid chain: Probable acetyl-CoA acyltransferase (393 aa).

Catalysis depends on cysteine 88, which acts as the Acyl-thioester intermediate. Catalysis depends on proton acceptor residues histidine 349 and cysteine 378.

This sequence belongs to the thiolase-like superfamily. Thiolase family.

It localises to the cytoplasm. The enzyme catalyses 2 acetyl-CoA = acetoacetyl-CoA + CoA. The polypeptide is Probable acetyl-CoA acyltransferase (Staphylococcus aureus (strain MSSA476)).